The following is a 539-amino-acid chain: CTP synthase (539 aa).

The tract at residues 1–267 is amidoligase domain; it reads MTKYIFVTGG…DQKVVDFLHI (267 aa). A CTP-binding site is contributed by S13. S13 is a UTP binding site. 14-19 serves as a coordination point for ATP; sequence SLGKGI. Residue Y54 participates in L-glutamine binding. An ATP-binding site is contributed by D71. 2 residues coordinate Mg(2+): D71 and E141. Residues 148-150, 188-193, and K224 each bind CTP; these read DME and KSKPTQ. UTP contacts are provided by residues 188–193 and K224; that span reads KSKPTQ. In terms of domain architecture, Glutamine amidotransferase type-1 spans 294 to 537; it reads KITLVGKYVE…IGAASGLQVD (244 aa). G356 is an L-glutamine binding site. Catalysis depends on C383, which acts as the Nucleophile; for glutamine hydrolysis. Residues 384-387, E407, and R465 contribute to the L-glutamine site; that span reads LGMQ. Catalysis depends on residues H510 and E512.

Belongs to the CTP synthase family. In terms of assembly, homotetramer.

The enzyme catalyses UTP + L-glutamine + ATP + H2O = CTP + L-glutamate + ADP + phosphate + 2 H(+). It carries out the reaction L-glutamine + H2O = L-glutamate + NH4(+). The catalysed reaction is UTP + NH4(+) + ATP = CTP + ADP + phosphate + 2 H(+). The protein operates within pyrimidine metabolism; CTP biosynthesis via de novo pathway; CTP from UDP: step 2/2. With respect to regulation, allosterically activated by GTP, when glutamine is the substrate; GTP has no effect on the reaction when ammonia is the substrate. The allosteric effector GTP functions by stabilizing the protein conformation that binds the tetrahedral intermediate(s) formed during glutamine hydrolysis. Inhibited by the product CTP, via allosteric rather than competitive inhibition. Functionally, catalyzes the ATP-dependent amination of UTP to CTP with either L-glutamine or ammonia as the source of nitrogen. Regulates intracellular CTP levels through interactions with the four ribonucleotide triphosphates. This chain is CTP synthase, found in Lactobacillus delbrueckii subsp. bulgaricus (strain ATCC 11842 / DSM 20081 / BCRC 10696 / JCM 1002 / NBRC 13953 / NCIMB 11778 / NCTC 12712 / WDCM 00102 / Lb 14).